Here is a 172-residue protein sequence, read N- to C-terminus: Single-stranded DNA-binding protein 2 (172 aa).

Positions 6–111 constitute an SSB domain; it reads VNKVILVGHI…VIVNVGGTMQ (106 aa). Residues 55 to 61 mediate DNA binding; sequence WHRVVVF. The tract at residues 113–172 is disordered; sequence LGRHNSQPQQEPQTPPTAAKGEGKAVKGAGNAAKGKNAAAPQQPPAQPDPAYDFDDDIPF. The segment covering 119 to 153 has biased composition (low complexity); sequence QPQQEPQTPPTAAKGEGKAVKGAGNAAKGKNAAAP. The short motif at 167–172 is the Important for interaction with partner proteins element; the sequence is DDDIPF.

Homotetramer.

In terms of biological role, plays an important role in DNA replication, recombination and repair. Binds to ssDNA and to an array of partner proteins to recruit them to their sites of action during DNA metabolism. In Salmonella typhimurium (strain LT2 / SGSC1412 / ATCC 700720), this protein is Single-stranded DNA-binding protein 2 (ssb2).